The chain runs to 243 residues: Probable phosphatase CLI_3563 (243 aa).

His8, His10, His16, His41, Glu74, His102, His132, Asp192, and His194 together coordinate Zn(2+).

It belongs to the PHP family. Zn(2+) is required as a cofactor.

The protein is Probable phosphatase CLI_3563 of Clostridium botulinum (strain Langeland / NCTC 10281 / Type F).